We begin with the raw amino-acid sequence, 349 residues long: 5-deoxyribose 1-phosphate isomerase (349 aa).

Substrate is bound by residues 49 to 51 (RGA), Arg92, and Gln199. Asp240 (proton donor) is an active-site residue. Position 250-251 (250-251 (NK)) interacts with substrate.

Belongs to the EIF-2B alpha/beta/delta subunits family. DrdI subfamily.

It carries out the reaction 5-deoxy-alpha-D-ribose 1-phosphate = 5-deoxy-D-ribulose 1-phosphate. The protein operates within carbohydrate degradation. Functionally, catalyzes the isomerization of 5-deoxy-alpha-D-ribose 1-phosphate to 5-deoxy-D-ribulose 1-phosphate, as part of a 5-deoxyribose salvage pathway that recycles this toxic radical SAM enzyme by-product to mainstream metabolites. The sequence is that of 5-deoxyribose 1-phosphate isomerase from Clostridium botulinum (strain Langeland / NCTC 10281 / Type F).